The following is a 199-amino-acid chain: Holliday junction branch migration complex subunit RuvA (199 aa).

Residues 1-64 form a domain I region; the sequence is MIGRITGILL…EDGHFLYGFA (64 aa). The tract at residues 65–143 is domain II; it reads SADERAAFRQ…RALPGFGAST (79 aa). The interval 144–152 is flexible linker; the sequence is VPGAAAQPA. The tract at residues 152 to 199 is domain III; sequence ADSRSDILNALLALGYSDKEAQSALKAIPPETGVSDGIRQALKLLSKA.

Belongs to the RuvA family. As to quaternary structure, homotetramer. Forms an RuvA(8)-RuvB(12)-Holliday junction (HJ) complex. HJ DNA is sandwiched between 2 RuvA tetramers; dsDNA enters through RuvA and exits via RuvB. An RuvB hexamer assembles on each DNA strand where it exits the tetramer. Each RuvB hexamer is contacted by two RuvA subunits (via domain III) on 2 adjacent RuvB subunits; this complex drives branch migration. In the full resolvosome a probable DNA-RuvA(4)-RuvB(12)-RuvC(2) complex forms which resolves the HJ.

The protein resides in the cytoplasm. Functionally, the RuvA-RuvB-RuvC complex processes Holliday junction (HJ) DNA during genetic recombination and DNA repair, while the RuvA-RuvB complex plays an important role in the rescue of blocked DNA replication forks via replication fork reversal (RFR). RuvA specifically binds to HJ cruciform DNA, conferring on it an open structure. The RuvB hexamer acts as an ATP-dependent pump, pulling dsDNA into and through the RuvAB complex. HJ branch migration allows RuvC to scan DNA until it finds its consensus sequence, where it cleaves and resolves the cruciform DNA. This chain is Holliday junction branch migration complex subunit RuvA, found in Aromatoleum aromaticum (strain DSM 19018 / LMG 30748 / EbN1) (Azoarcus sp. (strain EbN1)).